A 159-amino-acid chain; its full sequence is Cytochrome c-type biogenesis protein CcmE (159 aa).

Residues 1-8 (MNIRRKNR) lie on the Cytoplasmic side of the membrane. Residues 9-29 (LWIACAVLAGLALTITLVLYA) form a helical; Signal-anchor for type II membrane protein membrane-spanning segment. Topologically, residues 30 to 159 (LRSNIDLFYT…PESVYKDKAS (130 aa)) are periplasmic. Heme contacts are provided by H130 and Y134. A disordered region spans residues 130-159 (HDENYTPPEVEKAMQENHRRPESVYKDKAS).

Belongs to the CcmE/CycJ family.

It localises to the cell inner membrane. Functionally, heme chaperone required for the biogenesis of c-type cytochromes. Transiently binds heme delivered by CcmC and transfers the heme to apo-cytochromes in a process facilitated by CcmF and CcmH. This is Cytochrome c-type biogenesis protein CcmE from Citrobacter koseri (strain ATCC BAA-895 / CDC 4225-83 / SGSC4696).